A 363-amino-acid polypeptide reads, in one-letter code: tRNA-specific 2-thiouridylase MnmA (363 aa).

Residues G13–S20 and M39 each bind ATP. Residues N99–D101 form an interaction with target base in tRNA region. C104 functions as the Nucleophile in the catalytic mechanism. The cysteines at positions 104 and 200 are disulfide-linked. G128 is an ATP binding site. The interaction with tRNA stretch occupies residues K150–Q152. C200 serves as the catalytic Cysteine persulfide intermediate. Positions R310–Y311 are interaction with tRNA.

Belongs to the MnmA/TRMU family.

The protein resides in the cytoplasm. The enzyme catalyses S-sulfanyl-L-cysteinyl-[protein] + uridine(34) in tRNA + AH2 + ATP = 2-thiouridine(34) in tRNA + L-cysteinyl-[protein] + A + AMP + diphosphate + H(+). Its function is as follows. Catalyzes the 2-thiolation of uridine at the wobble position (U34) of tRNA, leading to the formation of s(2)U34. The sequence is that of tRNA-specific 2-thiouridylase MnmA from Ruthia magnifica subsp. Calyptogena magnifica.